We begin with the raw amino-acid sequence, 254 residues long: Small ribosomal subunit protein uS2 (254 aa).

This sequence belongs to the universal ribosomal protein uS2 family.

This Oceanobacillus iheyensis (strain DSM 14371 / CIP 107618 / JCM 11309 / KCTC 3954 / HTE831) protein is Small ribosomal subunit protein uS2.